A 525-amino-acid chain; its full sequence is GMP synthase [glutamine-hydrolyzing] (525 aa).

Positions 8-207 (KILILDFGSQ…ALDICGCAAN (200 aa)) constitute a Glutamine amidotransferase type-1 domain. Cys85 acts as the Nucleophile in catalysis. Residues His181 and Glu183 contribute to the active site. Residues 208 to 400 (WKPSSIIEDA…LGLPYNMLYR (193 aa)) form the GMPS ATP-PPase domain. 235-241 (SGGVDSS) lines the ATP pocket.

In terms of assembly, homodimer.

It catalyses the reaction XMP + L-glutamine + ATP + H2O = GMP + L-glutamate + AMP + diphosphate + 2 H(+). It participates in purine metabolism; GMP biosynthesis; GMP from XMP (L-Gln route): step 1/1. Catalyzes the synthesis of GMP from XMP. This chain is GMP synthase [glutamine-hydrolyzing], found in Shewanella oneidensis (strain ATCC 700550 / JCM 31522 / CIP 106686 / LMG 19005 / NCIMB 14063 / MR-1).